The following is a 182-amino-acid chain: CDP-diacylglycerol--glycerol-3-phosphate 3-phosphatidyltransferase (182 aa).

The Cytoplasmic portion of the chain corresponds to 2-12; that stretch reads QFNIPTLLTLF. The helical transmembrane segment at 13 to 37 threads the bilayer; that stretch reads RVILIPFLVVVFYLPFAWAPMVSAL. Topologically, residues 38 to 60 are periplasmic; it reads IFCIAAITDWFDGFLARRWNQST. Residues 61–81 form a helical membrane-spanning segment; the sequence is RFGAFLDPVADKVLVAIAMVL. At 82–86 the chain is on the cytoplasmic side; it reads VTEHY. The helical transmembrane segment at 87-107 threads the bilayer; it reads HSWWVTLPAATMIAREIIISA. Residues 108-145 lie on the Periplasmic side of the membrane; sequence LREWMAELGKRSSVAVSWIGKVKTTAQMVALAWLLWRP. A helical membrane pass occupies residues 146–168; it reads NIWVEYAGIALFFVAAVLTLWSM. Residues 169 to 181 lie on the Cytoplasmic side of the membrane; it reads LQYLSAARGDLLD.

Belongs to the CDP-alcohol phosphatidyltransferase class-I family.

It localises to the cell inner membrane. It carries out the reaction a CDP-1,2-diacyl-sn-glycerol + sn-glycerol 3-phosphate = a 1,2-diacyl-sn-glycero-3-phospho-(1'-sn-glycero-3'-phosphate) + CMP + H(+). It participates in phospholipid metabolism; phosphatidylglycerol biosynthesis; phosphatidylglycerol from CDP-diacylglycerol: step 1/2. In terms of biological role, catalyzes the conversion of cytidine diphosphate diacylglycerol (CDP-DG) and glycerol 3-phosphate into phosphatidylglycerol. Essential for the synthesis of anionic phospholipids, thereby playing a role in balancing the ratio of zwitterionic and anionic phospholipids, which is thought to be important for normal membrane function. This is CDP-diacylglycerol--glycerol-3-phosphate 3-phosphatidyltransferase from Salmonella choleraesuis (strain SC-B67).